The chain runs to 88 residues: Beta-insect excitatory toxin BmKIT1 (88 aa).

A signal peptide spans 1–18 (MKFFLIFLVIFPIMGVLG). In terms of domain architecture, LCN-type CS-alpha/beta spans 20-83 (KNGYAVDSSG…IKDATKSYCD (64 aa)). Disulfide bonds link Cys-34-Cys-55, Cys-40-Cys-60, Cys-44-Cys-62, and Cys-56-Cys-82. Ile-87 is subject to Isoleucine amide.

It belongs to the long (4 C-C) scorpion toxin superfamily. Sodium channel inhibitor family. Beta subfamily. Expressed by the venom gland.

It is found in the secreted. Excitatory insect beta-toxins induce a spastic paralysis. They bind voltage-independently at site-4 of sodium channels (Nav) and shift the voltage of activation toward more negative potentials thereby affecting sodium channel activation and promoting spontaneous and repetitive firing. This toxin is active only on insects. The chain is Beta-insect excitatory toxin BmKIT1 from Olivierus martensii (Manchurian scorpion).